Here is a 262-residue protein sequence, read N- to C-terminus: MFEARLVQGSVLKRVLEALKDLITEACWDLGSGGISLQSMDSSHVSLVQLTLRSEGFDTYRCDRNIAMGVNLNSMSKILKCAGNEDIITLRAEDNADTLALVFEAPNQEKVSDYEMKLMDLDVEQLGIPEQEYSCVVKMPSAEFARICRDLSHIGDAVVISCAKDGVKFSANGELGNGNIKLSQTSNVDKEEEAVTIEMNEPVQLTFALRYLNFFTKATPLSPTVTLSMSADVPLVVEYKIADMGHLKYYLAPKIEDQQEGS.

The DNA-binding element occupies 61 to 80 (RCDRNIAMGVNLNSMSKILK). Lys-164 is covalently cross-linked (Glycyl lysine isopeptide (Lys-Gly) (interchain with G-Cter in ubiquitin)).

Belongs to the PCNA family. Homotrimer. Forms a complex with activator 1 heteropentamer in the presence of ATP. Interacts with DNMT1. Interacts with CHAF1A. Component of the replisome complex. In terms of processing, monoubiquitinated by the UBE2B-RAD18 complex on Lys-164. Monoubiquitination at Lys-164 also takes place in undamaged proliferating cells, and is mediated by the DCX(DTL) complex, leading to enhance PCNA-dependent translesion DNA synthesis.

The protein resides in the nucleus. Its function is as follows. This protein is an auxiliary protein of DNA polymerase delta and is involved in the control of eukaryotic DNA replication by increasing the polymerase's processibility during elongation of the leading strand. This Gallus gallus (Chicken) protein is Proliferating cell nuclear antigen (PCNA).